Here is an 878-residue protein sequence, read N- to C-terminus: E3 ubiquitin-protein ligase SH3RF3 (878 aa).

Positions 19 to 40 (RGEGEDRQGEQQRGAQARTEED) are disordered. The RING-type zinc finger occupies 52 to 93 (CSVCLERLDTTAKVLPCQHTFCRRCLESIVCSRHELRCPECR). The segment at 120 to 145 (PRTGASPGSSPPARPGPGTFSALAGG) is disordered. SH3 domains are found at residues 187-246 (SQLP…CVRP) and 249-312 (QALP…LNDS). Residues 364-433 (RVDSKKNAKK…TVPTQDSSSA (70 aa)) are interaction with RAC1. Ser-395 is subject to Phosphoserine. Residues 458–519 (LPLNVYLALY…PGNYVTPVSR (62 aa)) enclose the SH3 3 domain. Disordered stretches follow at residues 574–659 (QHPA…CPRP) and 688–758 (PISG…MGPE). Polar residues-rich tracts occupy residues 590–609 (AQPTASQAGDTTIPTATHAS), 618–633 (ATVSPLRTQTSPSRLP), 643–653 (ASPQHGQQSPA), and 690–699 (SGLSTPSLIN). Positions 703–716 (KPDDKKNEKKEKKS) are enriched in basic and acidic residues. Positions 741-752 (HDPQSAMDTSLQ) are enriched in polar residues. Position 792 is a phosphoserine (Ser-792). The region spanning 819-878 (LPRERYRVVVSYPPQSEAEIELKEGDIVFVHKKHEDGWFKGTLQRNGRTGLFPGSFVESF) is the SH3 4 domain.

This sequence belongs to the SH3RF family. Interacts (via SH3 domain 3) with PAK2. Interacts with RAC1 (GTP-bound form). In terms of processing, autoubiquitinated.

It catalyses the reaction S-ubiquitinyl-[E2 ubiquitin-conjugating enzyme]-L-cysteine + [acceptor protein]-L-lysine = [E2 ubiquitin-conjugating enzyme]-L-cysteine + N(6)-ubiquitinyl-[acceptor protein]-L-lysine.. It functions in the pathway protein modification; protein ubiquitination. Has E3 ubiquitin-protein ligase activity. In Mus musculus (Mouse), this protein is E3 ubiquitin-protein ligase SH3RF3 (Sh3rf3).